A 251-amino-acid chain; its full sequence is 3-deoxy-manno-octulosonate cytidylyltransferase (251 aa).

The protein belongs to the KdsB family.

Its subcellular location is the cytoplasm. The catalysed reaction is 3-deoxy-alpha-D-manno-oct-2-ulosonate + CTP = CMP-3-deoxy-beta-D-manno-octulosonate + diphosphate. Its pathway is nucleotide-sugar biosynthesis; CMP-3-deoxy-D-manno-octulosonate biosynthesis; CMP-3-deoxy-D-manno-octulosonate from 3-deoxy-D-manno-octulosonate and CTP: step 1/1. It participates in bacterial outer membrane biogenesis; lipopolysaccharide biosynthesis. In terms of biological role, activates KDO (a required 8-carbon sugar) for incorporation into bacterial lipopolysaccharide in Gram-negative bacteria. The polypeptide is 3-deoxy-manno-octulosonate cytidylyltransferase (Geotalea uraniireducens (strain Rf4) (Geobacter uraniireducens)).